A 307-amino-acid polypeptide reads, in one-letter code: Acetaldehyde dehydrogenase 1 (307 aa).

Cys131 acts as the Acyl-thioester intermediate in catalysis. Residues 162–170 (SIGPGTRKN) and Asn273 each bind NAD(+).

This sequence belongs to the acetaldehyde dehydrogenase family.

The catalysed reaction is acetaldehyde + NAD(+) + CoA = acetyl-CoA + NADH + H(+). The sequence is that of Acetaldehyde dehydrogenase 1 (salG) from Metapseudomonas furukawaii (Pseudomonas furukawaii).